A 233-amino-acid chain; its full sequence is Octanoyltransferase (233 aa).

The region spanning 33–216 is the BPL/LPL catalytic domain; it reads GRAQDTVILL…HLVRALSSNG (184 aa). Residues 71–78, 146–148, and 159–161 contribute to the substrate site; these read RGGRITWH, AIG, and GFA. C177 functions as the Acyl-thioester intermediate in the catalytic mechanism.

This sequence belongs to the LipB family.

The protein localises to the cytoplasm. It catalyses the reaction octanoyl-[ACP] + L-lysyl-[protein] = N(6)-octanoyl-L-lysyl-[protein] + holo-[ACP] + H(+). It functions in the pathway protein modification; protein lipoylation via endogenous pathway; protein N(6)-(lipoyl)lysine from octanoyl-[acyl-carrier-protein]: step 1/2. Functionally, catalyzes the transfer of endogenously produced octanoic acid from octanoyl-acyl-carrier-protein onto the lipoyl domains of lipoate-dependent enzymes. Lipoyl-ACP can also act as a substrate although octanoyl-ACP is likely to be the physiological substrate. This chain is Octanoyltransferase, found in Clavibacter michiganensis subsp. michiganensis (strain NCPPB 382).